The following is a 581-amino-acid chain: Serine/threonine-protein kinase PINK1, mitochondrial (581 aa).

The transit peptide at 1 to 77 (MAVRQALGRG…RFFRQSVAGL (77 aa)) directs the protein to the mitochondrion. The Mitochondrial intermembrane segment spans residues 78–93 (AARLQRQFVVRAWGCA). Residues 94-110 (GPCGRAVFLAFGLGLGL) traverse the membrane as a helical segment. The interval 111 to 117 (IEEKQAE) is required for outer membrane localization. Residues 111 to 581 (IEEKQAESRR…LLLCSWRAAL (471 aa)) are Cytoplasmic-facing. Positions 156-511 (YLIGQSIGKG…VAANVLHLSL (356 aa)) constitute a Protein kinase domain. ATP is bound by residues 162 to 170 (IGKGCSAAV) and Lys186. Residues 189 to 208 (GLLPGRGPGTSAPGEGQERA) are disordered. The residue at position 228 (Ser228) is a Phosphoserine; by autocatalysis. Residue Asp362 is the Proton acceptor of the active site. Phosphoserine; by autocatalysis is present on Ser402.

It belongs to the protein kinase superfamily. Ser/Thr protein kinase family. In terms of assembly, upon mitochondrial depolarization, it forms a supercomplex with TOM and TIM23 complexes. PINK1-TOM-TIM23 supercomplex formation requires PINK1 interaction with TOMM20 and TOMM70 and is critical for PINK1 stabilization at the outer mitochondrial membrane, kinase activation and downstream mitophagy. Upon mitochondrial depolarization, interacts with TIMM23; the interaction is required for PINK1 accumulation at the outer mitochondrial membrane, kinase activation by autophosphorylation and PRKN recruitement to mitochondria. Interacts with PRKN. Interacts with FBXO7. Forms a complex with PRKN and PARK7. Interacts with NENF. Mg(2+) serves as cofactor. Post-translationally, proteolytically cleaved. In healthy cells, the precursor is continuously imported into the inner mitochondrial membrane (IMM), where it is proteolytically cleaved by mitochondrial-processing peptidase (MPP) and then undergoes further proteolytic cleavage by PARL or AFG3L2 to give rise to the 52 kDa short form. The 52 kDa short form is then released into the cytosol where it rapidly undergoes proteasome-dependent degradation. In unhealthy cells, when cellular stress conditions lead to the loss of mitochondrial membrane potential, mitochondrial import is impaired leading to the precursor accumulating on the outer mitochondrial membrane (OMM). If accumulation at the OMM fails and it is imported into the depolarized mitochondria, it undergoes cleavage by the IMM protease OMA1, promoting its subsequent degradation by the proteasome. In terms of processing, autophosphorylated. Loss of mitochondrial membrane potential results in the precursor accumulating on the outer mitochondrial membrane (OMM) where it is activated by autophosphorylation. Autophosphorylation at Ser-228 and Ser-402 is sufficient and essential for selective recruitment of PRKN to depolarized mitochondria, via PINK1-dependent phosphorylation of ubiquitin and maybe PRKN. In terms of tissue distribution, highly expressed in heart, skeletal muscle and testis, and at lower levels in brain, placenta, liver, kidney, pancreas, prostate, ovary and small intestine. Present in the embryonic testis from an early stage of development.

It is found in the mitochondrion outer membrane. Its subcellular location is the mitochondrion inner membrane. It localises to the cytoplasm. The protein resides in the cytosol. It catalyses the reaction L-seryl-[protein] + ATP = O-phospho-L-seryl-[protein] + ADP + H(+). It carries out the reaction L-threonyl-[protein] + ATP = O-phospho-L-threonyl-[protein] + ADP + H(+). In terms of biological role, serine/threonine-protein kinase which acts as a sensor of mitochondrial damage and protects against mitochondrial dysfunction during cellular stress. It phosphorylates mitochondrial proteins to coordinate mitochondrial quality control mechanisms that remove and replace dysfunctional mitochondrial components. Depending on the severity of mitochondrial damage, activity ranges from preventing apoptosis and stimulating mitochondrial biogenesis to eliminating severely damaged mitochondria via PINK1-PRKN-dependent mitophagy. When cellular stress results in irreversible mitochondrial damage, PINK1 accumulates at the outer mitochondrial membrane (OMM) where it phosphorylates pre-existing polyubiquitin chains at 'Ser-65', recruits PRKN from the cytosol to the OMM and activates PRKN by phosphorylation at 'Ser-65'; activated PRKN then ubiquinates VDAC1 and other OMM proteins to initiate mitophagy. The PINK1-PRKN pathway also promotes fission of damaged mitochondria through phosphorylation and PRKN-dependent degradation of mitochondrial proteins involved in fission such as MFN2. This prevents the refusion of unhealthy mitochondria with the mitochondrial network or initiates mitochondrial fragmentation facilitating their later engulfment by autophagosomes. Also promotes mitochondrial fission independently of PRKN and ATG7-mediated mitophagy, via the phosphorylation and activation of DNM1L. Regulates motility of damaged mitochondria by promoting the ubiquitination and subsequent degradation of MIRO1 and MIRO2; in motor neurons, this likely inhibits mitochondrial intracellular anterograde transport along the axons which probably increases the chance of the mitochondria undergoing mitophagy in the soma. Required for ubiquinone reduction by mitochondrial complex I by mediating phosphorylation of complex I subunit NDUFA10. Phosphorylates LETM1, positively regulating its mitochondrial calcium transport activity. This chain is Serine/threonine-protein kinase PINK1, mitochondrial (PINK1), found in Homo sapiens (Human).